We begin with the raw amino-acid sequence, 1235 residues long: ATP-dependent helicase/nuclease subunit A (1235 aa).

In terms of domain architecture, UvrD-like helicase ATP-binding spans S12–R482. A33–T40 serves as a coordination point for ATP. The UvrD-like helicase C-terminal domain maps to A509–G800.

Belongs to the helicase family. AddA subfamily. Heterodimer of AddA and AddB/RexB. Mg(2+) serves as cofactor.

The catalysed reaction is Couples ATP hydrolysis with the unwinding of duplex DNA by translocating in the 3'-5' direction.. It catalyses the reaction ATP + H2O = ADP + phosphate + H(+). Functionally, the heterodimer acts as both an ATP-dependent DNA helicase and an ATP-dependent, dual-direction single-stranded exonuclease. Recognizes the chi site generating a DNA molecule suitable for the initiation of homologous recombination. The AddA nuclease domain is required for chi fragment generation; this subunit has the helicase and 3' -&gt; 5' nuclease activities. The chain is ATP-dependent helicase/nuclease subunit A from Listeria monocytogenes serotype 4b (strain F2365).